The following is a 392-amino-acid chain: Speckle-type POZ protein-like (392 aa).

One can recognise an MATH domain in the interval 31–161 (KFSYMWTINN…DDKLTLYCEV (131 aa)). One can recognise a BTB domain in the interval 200 to 267 (TDCSLFVEGK…IYTGGTPHVD (68 aa)).

It belongs to the Tdpoz family. In terms of assembly, homodimer. Heterodimer with SPOP. Component of cullin-RING-based BCR (BTB-CUL3-RBX1) E3 ubiquitin-protein ligase complexes containing homodimeric SPOPL or the heterodimer formed by SPOP and SPOPL.

The protein resides in the nucleus. It participates in protein modification; protein ubiquitination. Component of a cullin-RING-based BCR (BTB-CUL3-RBX1) E3 ubiquitin-protein ligase complex that mediates the ubiquitination and subsequent proteasomal degradation of target proteins, but with relatively low efficiency. The chain is Speckle-type POZ protein-like (spopl) from Xenopus laevis (African clawed frog).